The following is a 439-amino-acid chain: 23S rRNA (uracil(1939)-C(5))-methyltransferase RlmD (439 aa).

Residues 10–69 (KTQLNTRHQAVQVERLDHHGAGIAYLKKKPLFIDGALPGEEVVTQLVEEKSKFARGKLIK) form the TRAM domain. [4Fe-4S] cluster is bound by residues cysteine 82, cysteine 88, cysteine 91, and cysteine 169. Residues glutamine 272, phenylalanine 301, asparagine 306, glutamate 322, asparagine 349, and aspartate 370 each coordinate S-adenosyl-L-methionine. Cysteine 396 (nucleophile) is an active-site residue.

The protein belongs to the class I-like SAM-binding methyltransferase superfamily. RNA M5U methyltransferase family. RlmD subfamily.

It carries out the reaction uridine(1939) in 23S rRNA + S-adenosyl-L-methionine = 5-methyluridine(1939) in 23S rRNA + S-adenosyl-L-homocysteine + H(+). Functionally, catalyzes the formation of 5-methyl-uridine at position 1939 (m5U1939) in 23S rRNA. The protein is 23S rRNA (uracil(1939)-C(5))-methyltransferase RlmD of Vibrio parahaemolyticus serotype O3:K6 (strain RIMD 2210633).